Consider the following 437-residue polypeptide: Kynureninase (437 aa).

Pyridoxal 5'-phosphate contacts are provided by residues L99, T100, 127-130 (FPSD), S183, D212, H215, and Y237. An N6-(pyridoxal phosphate)lysine modification is found at K238. Residues W267 and N295 each coordinate pyridoxal 5'-phosphate.

Belongs to the kynureninase family. In terms of assembly, homodimer. Pyridoxal 5'-phosphate serves as cofactor.

It is found in the cytoplasm. The catalysed reaction is L-kynurenine + H2O = anthranilate + L-alanine + H(+). It carries out the reaction 3-hydroxy-L-kynurenine + H2O = 3-hydroxyanthranilate + L-alanine + H(+). It functions in the pathway amino-acid degradation; L-kynurenine degradation; L-alanine and anthranilate from L-kynurenine: step 1/1. The protein operates within cofactor biosynthesis; NAD(+) biosynthesis; quinolinate from L-kynurenine: step 2/3. Functionally, catalyzes the cleavage of L-kynurenine (L-Kyn) and L-3-hydroxykynurenine (L-3OHKyn) into anthranilic acid (AA) and 3-hydroxyanthranilic acid (3-OHAA), respectively. The sequence is that of Kynureninase from Yarrowia lipolytica (strain CLIB 122 / E 150) (Yeast).